We begin with the raw amino-acid sequence, 1032 residues long: MASSLNELNLVQVLEQASNPQHIRSDVQKLAEQQLRQWETQAGFHYLLQSIYLNLSNSLQIRWLAVIQFKNGVDKYWRSTRINAIPKDEKASIRGRLFEMIDEQNNQLCIQNAQASARIARLDFPVEWPTLFEDLENLLNDEIIRKDSVKIYNILMHINQIVKVLGTARIGRCRPAMQSKVPLILPLIVRIYLQSFEEWTTSSNLNYEDLSSLQVSYLALKVLRRIICEGYDRPQTDQSVCDFIKLSVSHFEMLISNHENFKKFDIYEKFIKCLGKLYFNLVTGSPANFILLPCSTQILITYTRLIFDKAPKVYRENSDVTGDFWEQTAIRGLLILKRVINFIHKKGAITLKARSDKLTIDASINKINTEFLNENLITRLVDTLMEWYLRLRPTELENWFMDPEEWINEQMATSYEYQIRPCAENVFQDLMNTFSELLVPYLLKKIENDASKLSNSLDDFLRKDAIYASFQLSASAVSEMVDFDRLLIQVFLPEATNTNISGDELRIIRRRVALIINEWSTVKCSEESKSLCYKLFTNFLTDEDDKVVLLTTVQTVRTMVDDWNFNKDTFQPFLTENVHLLLRKILPSVSLTETRLYVLNTLSDIIIQTKPLISRDLLVEILQIIPNLWEIATNNASEAILANALLRLLRNLVSSLGSQSHLTWDIAIPVVALACDPSSMQYQLLSEDGYELWGMLLQNFSSHDQEFDDKFVELVPFLKYGIETHTEILPTLLEIIKSYALILNPVDFFSNNTFQDIFKQMSKYLLKLREDSFQLVLEIWEILILSNESDYENLLLQKFYETGVLSALFDAIFLEEAPSSYLCSQIIQIIARISYVNPDALMTFLATYHDNLPTSNENARMPESIRKIVSKDQTYDSVVNKLLTGWIVCFRDIFDPKFKKVHILGISSLLRTGLVPILTEFSSIASLWIEMLEEINETNRGDCEKYHLNDIVTEQSIAFHPLTAEQLRYHQLCKNNDPVHNISLKDFISQSMEYLESHLGVERYQEFLKTINPSLLENLQMFLSIQPQEARP.

Ala2 is modified (N-acetylalanine). Positions 31–103 (AEQQLRQWET…RGRLFEMIDE (73 aa)) constitute an Importin N-terminal domain.

The protein belongs to the importin beta family. As to quaternary structure, interacts with GTP-bound GSP1 and RFP1. Associates with the nuclear pore complex.

It localises to the cytoplasm. Its subcellular location is the nucleus. Functions in nuclear protein import as nuclear transport receptor. Serves as receptor for nuclear localization signals (NLS) in cargo substrates. Thought to mediate docking of the importin/substrate complex to the nuclear pore complex (NPC) through binding to nucleoporin and the complex is subsequently translocated through the pore by an energy requiring, RAN-dependent mechanism. Required for nuclear import of Ho endonuclease and RFP1, and involved in rRNA-processing and assembly or export of 60S ribosomal subunits. This chain is Importin beta-like protein KAP120 (KAP120), found in Saccharomyces cerevisiae (strain ATCC 204508 / S288c) (Baker's yeast).